Here is a 359-residue protein sequence, read N- to C-terminus: Lactosylceramide 4-alpha-galactosyltransferase (359 aa).

Residues 1–30 are Cytoplasmic-facing; that stretch reads MGISCSHLEETMSKPPDCLLRMLRGTPRQR. A helical; Signal-anchor for type II membrane protein transmembrane segment spans residues 31–51; sequence VFTFFIISFKFMFLISILIYW. Topologically, residues 52 to 359 are lumenal; sequence HTVGAPKDQR…TTHRAMKMYL (308 aa). The DXD motif motif lies at 198–200; the sequence is DTD. N-linked (GlcNAc...) asparagine glycosylation is found at Asn-209 and Asn-315.

Belongs to the glycosyltransferase 32 family.

Its subcellular location is the golgi apparatus membrane. It catalyses the reaction a beta-D-Gal-(1-&gt;4)-beta-D-Glc-(1&lt;-&gt;1)-Cer(d18:1(4E)) + UDP-alpha-D-galactose = a globoside Gb3Cer (d18:1(4E)) + UDP + H(+). The enzyme catalyses a beta-D-Gal-(1&lt;-&gt;1')-ceramide + UDP-alpha-D-galactose = alpha-D-Gal-(1-&gt;4)-beta-D-Gal-(1&lt;-&gt;1')-Cer + UDP + H(+). It participates in glycolipid biosynthesis. In terms of biological role, catalyzes the transfer of galactose from UDP-alpha-D-galactose to lactosylceramide/beta-D-galactosyl-(1-&gt;4)-beta-D-glucosyl-(1&lt;-&gt;1)-ceramide(d18:1(4E)) to produce globotriaosylceramide/globoside Gb3Cer (d18:1(4E)). Also able to transfer galactose to galactosylceramide/beta-D-Gal-(1&lt;-&gt;1')-Cer. Globoside Gb3Cer is a glycosphingolipid of the globo serie, one of the major types of neutral root structures of glycosphingolipids, that constitute a significant portion of mammalian cell membranes. This Mus musculus (Mouse) protein is Lactosylceramide 4-alpha-galactosyltransferase.